The primary structure comprises 717 residues: Ribosomal RNA large subunit methyltransferase K/L (717 aa).

The region spanning 43 to 154 (IGYKACLWSR…KGKANITLDL (112 aa)) is the THUMP domain.

The protein belongs to the methyltransferase superfamily. RlmKL family.

It localises to the cytoplasm. The catalysed reaction is guanosine(2445) in 23S rRNA + S-adenosyl-L-methionine = N(2)-methylguanosine(2445) in 23S rRNA + S-adenosyl-L-homocysteine + H(+). The enzyme catalyses guanosine(2069) in 23S rRNA + S-adenosyl-L-methionine = N(2)-methylguanosine(2069) in 23S rRNA + S-adenosyl-L-homocysteine + H(+). Functionally, specifically methylates the guanine in position 2445 (m2G2445) and the guanine in position 2069 (m7G2069) of 23S rRNA. This is Ribosomal RNA large subunit methyltransferase K/L from Aeromonas hydrophila subsp. hydrophila (strain ATCC 7966 / DSM 30187 / BCRC 13018 / CCUG 14551 / JCM 1027 / KCTC 2358 / NCIMB 9240 / NCTC 8049).